The sequence spans 693 residues: Polyribonucleotide nucleotidyltransferase (693 aa).

Mg(2+) contacts are provided by aspartate 489 and aspartate 495. Residues 556–615 enclose the KH domain; sequence PQIHIMNVNPAKIKDVVGRGGSVVKGIVEKTGAQIDTSDSGEVKIFAKDKRSLDLAKSMV. The 69-residue stretch at 625–693 folds into the S1 motif domain; it reads GQIYKGKIVK…GRVKLSLVAR (69 aa).

The protein belongs to the polyribonucleotide nucleotidyltransferase family. In terms of assembly, component of the RNA degradosome, which is a multiprotein complex involved in RNA processing and mRNA degradation. Mg(2+) is required as a cofactor.

It is found in the cytoplasm. It carries out the reaction RNA(n+1) + phosphate = RNA(n) + a ribonucleoside 5'-diphosphate. Functionally, involved in mRNA degradation. Catalyzes the phosphorolysis of single-stranded polyribonucleotides processively in the 3'- to 5'-direction. The sequence is that of Polyribonucleotide nucleotidyltransferase from Francisella philomiragia subsp. philomiragia (strain ATCC 25017 / CCUG 19701 / FSC 153 / O#319-036).